A 284-amino-acid polypeptide reads, in one-letter code: Diaminopimelate epimerase (284 aa).

N20, Q53, and N73 together coordinate substrate. The Proton donor role is filled by C82. Substrate is bound by residues 83–84 (GN), N167, N200, and 218–219 (ER). C227 acts as the Proton acceptor in catalysis. Residue 228–229 (GS) participates in substrate binding.

Belongs to the diaminopimelate epimerase family. In terms of assembly, homodimer.

It localises to the cytoplasm. It catalyses the reaction (2S,6S)-2,6-diaminopimelate = meso-2,6-diaminopimelate. Its pathway is amino-acid biosynthesis; L-lysine biosynthesis via DAP pathway; DL-2,6-diaminopimelate from LL-2,6-diaminopimelate: step 1/1. In terms of biological role, catalyzes the stereoinversion of LL-2,6-diaminopimelate (L,L-DAP) to meso-diaminopimelate (meso-DAP), a precursor of L-lysine and an essential component of the bacterial peptidoglycan. The polypeptide is Diaminopimelate epimerase (Xanthomonas euvesicatoria pv. vesicatoria (strain 85-10) (Xanthomonas campestris pv. vesicatoria)).